Reading from the N-terminus, the 198-residue chain is Guanylate kinase (198 aa).

One can recognise a Guanylate kinase-like domain in the interval 8-188 (GRVVVLSGPS…ACSELVSLLV (181 aa)). An ATP-binding site is contributed by 15 to 22 (GPSAVGKS).

The protein belongs to the guanylate kinase family.

It is found in the cytoplasm. It carries out the reaction GMP + ATP = GDP + ADP. Functionally, essential for recycling GMP and indirectly, cGMP. This chain is Guanylate kinase, found in Mycobacterium sp. (strain MCS).